Reading from the N-terminus, the 347-residue chain is Dihydroorotase (347 aa).

2 residues coordinate Zn(2+): H14 and H16. Residues 16-18 (HLR) and N42 contribute to the substrate site. Residues K100, H137, and H175 each coordinate Zn(2+). Position 100 is an N6-carboxylysine (K100). H137 is a binding site for substrate. L220 serves as a coordination point for substrate. D248 contributes to the Zn(2+) binding site. D248 is an active-site residue. Substrate-binding residues include H252 and A264.

The protein belongs to the metallo-dependent hydrolases superfamily. DHOase family. Class II DHOase subfamily. As to quaternary structure, homodimer. It depends on Zn(2+) as a cofactor.

The catalysed reaction is (S)-dihydroorotate + H2O = N-carbamoyl-L-aspartate + H(+). It participates in pyrimidine metabolism; UMP biosynthesis via de novo pathway; (S)-dihydroorotate from bicarbonate: step 3/3. Functionally, catalyzes the reversible cyclization of carbamoyl aspartate to dihydroorotate. In Pseudomonas savastanoi pv. phaseolicola (strain 1448A / Race 6) (Pseudomonas syringae pv. phaseolicola (strain 1448A / Race 6)), this protein is Dihydroorotase.